Consider the following 75-residue polypeptide: Small ribosomal subunit protein bS18 (75 aa).

It belongs to the bacterial ribosomal protein bS18 family. As to quaternary structure, part of the 30S ribosomal subunit. Forms a tight heterodimer with protein bS6.

Binds as a heterodimer with protein bS6 to the central domain of the 16S rRNA, where it helps stabilize the platform of the 30S subunit. This is Small ribosomal subunit protein bS18 from Sodalis glossinidius (strain morsitans).